A 209-amino-acid chain; its full sequence is Large ribosomal subunit protein uL3 (209 aa).

A disordered region spans residues 133-152 (THGNSLSHRVPGSIGQNQTP). Residue Gln-150 is modified to N5-methylglutamine.

Belongs to the universal ribosomal protein uL3 family. In terms of assembly, part of the 50S ribosomal subunit. Forms a cluster with proteins L14 and L19. Post-translationally, methylated by PrmB.

Functionally, one of the primary rRNA binding proteins, it binds directly near the 3'-end of the 23S rRNA, where it nucleates assembly of the 50S subunit. In Yersinia enterocolitica serotype O:8 / biotype 1B (strain NCTC 13174 / 8081), this protein is Large ribosomal subunit protein uL3.